The sequence spans 265 residues: Imidazole glycerol phosphate synthase subunit HisF (265 aa).

Catalysis depends on residues D12 and D131.

This sequence belongs to the HisA/HisF family. As to quaternary structure, heterodimer of HisH and HisF.

The protein resides in the cytoplasm. The enzyme catalyses 5-[(5-phospho-1-deoxy-D-ribulos-1-ylimino)methylamino]-1-(5-phospho-beta-D-ribosyl)imidazole-4-carboxamide + L-glutamine = D-erythro-1-(imidazol-4-yl)glycerol 3-phosphate + 5-amino-1-(5-phospho-beta-D-ribosyl)imidazole-4-carboxamide + L-glutamate + H(+). Its pathway is amino-acid biosynthesis; L-histidine biosynthesis; L-histidine from 5-phospho-alpha-D-ribose 1-diphosphate: step 5/9. Its function is as follows. IGPS catalyzes the conversion of PRFAR and glutamine to IGP, AICAR and glutamate. The HisF subunit catalyzes the cyclization activity that produces IGP and AICAR from PRFAR using the ammonia provided by the HisH subunit. This Alkalilimnicola ehrlichii (strain ATCC BAA-1101 / DSM 17681 / MLHE-1) protein is Imidazole glycerol phosphate synthase subunit HisF.